A 309-amino-acid chain; its full sequence is Taste receptor type 2 member 8 (309 aa).

Over 1–7 the chain is Extracellular; sequence MFSPADN. A helical transmembrane segment spans residues 8-28; it reads IFIILITGEFILGILGNGYIA. At 29–50 the chain is on the cytoplasmic side; that stretch reads LVNWIDWIKKKKISTVDYILTN. The helical transmembrane segment at 51–71 threads the bilayer; it reads LVIARICLISVMVVNGIVIVL. Topologically, residues 72–82 are extracellular; the sequence is NPDVYTKNKQQ. Residues 83–103 traverse the membrane as a helical segment; it reads IVIFTFWTFANYLNMWITTCL. Residues 104-131 lie on the Cytoplasmic side of the membrane; the sequence is NVFYFLKIASSSHPLFLWLKWKIDMVVH. The chain crosses the membrane as a helical span at residues 132–152; sequence WILLGCFAISLLVSLIAAIVL. The Extracellular portion of the chain corresponds to 153 to 184; that stretch reads SCDYRFHAIAKHKRNITEMFXVSKIPYFEPLT. N167 carries N-linked (GlcNAc...) asparagine glycosylation. A helical transmembrane segment spans residues 185 to 205; the sequence is LFNLFAIVPFIVSLISFFLLV. The Cytoplasmic segment spans residues 206–239; the sequence is RSLWRHTKQIKLYATGSRDPSTEVHVRAIKTMTS. The helical transmembrane segment at 240 to 260 threads the bilayer; that stretch reads FIFFFFLYFISSILMTFSYLM. At 261-266 the chain is on the extracellular side; that stretch reads TKYKLA. A helical membrane pass occupies residues 267–287; it reads VEFGEIAAILYPLGHSLILIV. The Cytoplasmic portion of the chain corresponds to 288 to 309; sequence LNNKLRQIFVRMLTCRKIACVI.

It belongs to the G-protein coupled receptor T2R family.

The protein localises to the membrane. Receptor that may play a role in the perception of bitterness and is gustducin-linked. May play a role in sensing the chemical composition of the gastrointestinal content. The activity of this receptor may stimulate alpha gustducin, mediate PLC-beta-2 activation and lead to the gating of TRPM5. In Pan troglodytes (Chimpanzee), this protein is Taste receptor type 2 member 8 (TAS2R8).